Here is a 458-residue protein sequence, read N- to C-terminus: 3-isopropylmalate dehydratase large subunit (458 aa).

3 residues coordinate [4Fe-4S] cluster: cysteine 337, cysteine 397, and cysteine 400.

This sequence belongs to the aconitase/IPM isomerase family. LeuC type 1 subfamily. As to quaternary structure, heterodimer of LeuC and LeuD. [4Fe-4S] cluster is required as a cofactor.

The enzyme catalyses (2R,3S)-3-isopropylmalate = (2S)-2-isopropylmalate. It participates in amino-acid biosynthesis; L-leucine biosynthesis; L-leucine from 3-methyl-2-oxobutanoate: step 2/4. In terms of biological role, catalyzes the isomerization between 2-isopropylmalate and 3-isopropylmalate, via the formation of 2-isopropylmaleate. This Leuconostoc mesenteroides subsp. mesenteroides (strain ATCC 8293 / DSM 20343 / BCRC 11652 / CCM 1803 / JCM 6124 / NCDO 523 / NBRC 100496 / NCIMB 8023 / NCTC 12954 / NRRL B-1118 / 37Y) protein is 3-isopropylmalate dehydratase large subunit.